A 457-amino-acid polypeptide reads, in one-letter code: ATP synthase subunit beta (457 aa).

Residue 147 to 154 (GGAGVGKT) participates in ATP binding.

Belongs to the ATPase alpha/beta chains family. As to quaternary structure, F-type ATPases have 2 components, CF(1) - the catalytic core - and CF(0) - the membrane proton channel. CF(1) has five subunits: alpha(3), beta(3), gamma(1), delta(1), epsilon(1). CF(0) has three main subunits: a(1), b(2) and c(9-12). The alpha and beta chains form an alternating ring which encloses part of the gamma chain. CF(1) is attached to CF(0) by a central stalk formed by the gamma and epsilon chains, while a peripheral stalk is formed by the delta and b chains.

It is found in the cell inner membrane. It carries out the reaction ATP + H2O + 4 H(+)(in) = ADP + phosphate + 5 H(+)(out). Produces ATP from ADP in the presence of a proton gradient across the membrane. The catalytic sites are hosted primarily by the beta subunits. The chain is ATP synthase subunit beta from Histophilus somni (strain 2336) (Haemophilus somnus).